Reading from the N-terminus, the 102-residue chain is MAAQKIRIRLKAYDHEVIDSSARKIVETVTRTGAQVAGPVPLPTEKNVYCVIRSPHKYKDSREHFEMRTHKRLIDILDPTPKTVDSLMRLDLPAGVDIEIKL.

The protein belongs to the universal ribosomal protein uS10 family. As to quaternary structure, part of the 30S ribosomal subunit.

In terms of biological role, involved in the binding of tRNA to the ribosomes. In Parafrankia sp. (strain EAN1pec), this protein is Small ribosomal subunit protein uS10.